We begin with the raw amino-acid sequence, 208 residues long: LexA repressor (208 aa).

The H-T-H motif DNA-binding region spans 28 to 48 (VREIGEAVGLASSSTVHGHLA). Catalysis depends on for autocatalytic cleavage activity residues Ser130 and Lys168.

This sequence belongs to the peptidase S24 family. In terms of assembly, homodimer.

It carries out the reaction Hydrolysis of Ala-|-Gly bond in repressor LexA.. In terms of biological role, represses a number of genes involved in the response to DNA damage (SOS response), including recA and lexA. In the presence of single-stranded DNA, RecA interacts with LexA causing an autocatalytic cleavage which disrupts the DNA-binding part of LexA, leading to derepression of the SOS regulon and eventually DNA repair. This Shouchella clausii (strain KSM-K16) (Alkalihalobacillus clausii) protein is LexA repressor.